The sequence spans 239 residues: Tetratricopeptide repeat protein 9B (239 aa).

The segment at 1–54 (MQRGALSPVLMLSAAPEPPPRPPPALSPPGPGSAPRHGSARSGPAPEPSGGLAA) is disordered. Phosphoserine occurs at positions 7 and 27. Positions 16 to 32 (PEPPPRPPPALSPPGPG) are enriched in pro residues. The TPR 1 repeat unit spans residues 63–97 (AVAFKAEGQRCYREKKFREAIGKYHRALLQLKAAQ). Positions 98-121 (GARPGGLPTPSPGPTTSPGPARLS) are disordered. Residues 104–114 (LPTPSPGPTTS) are compositionally biased toward pro residues. The stretch at 169–202 (FKATYRAGIAFYHLGDYARALRYLQEARSREPTD) is one TPR 2 repeat.

Belongs to the TTC9 family.

This is Tetratricopeptide repeat protein 9B (Ttc9b) from Mus musculus (Mouse).